The primary structure comprises 448 residues: Phosphoglucosamine mutase (448 aa).

S104 functions as the Phosphoserine intermediate in the catalytic mechanism. Positions 104, 245, 247, and 249 each coordinate Mg(2+). S104 carries the post-translational modification Phosphoserine.

The protein belongs to the phosphohexose mutase family. The cofactor is Mg(2+). Post-translationally, activated by phosphorylation.

It carries out the reaction alpha-D-glucosamine 1-phosphate = D-glucosamine 6-phosphate. Catalyzes the conversion of glucosamine-6-phosphate to glucosamine-1-phosphate. The polypeptide is Phosphoglucosamine mutase (Caulobacter vibrioides (strain ATCC 19089 / CIP 103742 / CB 15) (Caulobacter crescentus)).